The primary structure comprises 607 residues: MLEISARLEEALNRAFIKVFPQEDRSSKTSSILTGSNLVPASKPEFGDFQINCALSLAKEIKQPPREIAQKIANQLQKDNDFVRMCNPPRIAGPGFINLSINSKTLISEIHVRLNDKRLGVPLKKFSTDKIEEGKSNNRVILDFSSPNIAKEMHVGHLRSTIIGDSLARILEFRGYEVLRLNHVGDWGTQFGMLITHLKEVVPEVLHTKDVVEISDLVNFYRQAKKRFDEDQIFQNKSRSEVVNLQAGDKESLIAWQLLCNQSRKEFQKIYDRLDIKLTERGESFYNKFLVDVINDLKNKKLLINDQGAQCIFLDGLVGKNGKPQPIIIQKSDGGFNYATTDLAAIKYRLTIPPHGDGACRLIYVTDAGQASHFSGVFQIAKLANWIPTDCQIEHVPFGLVQGEDGKKLKTRSGETIRLVDLLDEAIQRAKNDLKNRLNTERRSENENFIDKVSTTVGIASIKYADLSQNRISNYQFSFDKMLSLQGNTAPYLLYALVRIAGISRKGGDLNVSSHNIQFNESQEWELIRKLLQLDYIIAEVEKELLPNRLCGYLFELSQTFNRFYDQVPILKASEPSRASRLILCSITADTLKLGMSLLGIPTLERM.

Positions 147–157 (PNIAKEMHVGH) match the 'HIGH' region motif.

The protein belongs to the class-I aminoacyl-tRNA synthetase family. Monomer.

The protein localises to the cytoplasm. The enzyme catalyses tRNA(Arg) + L-arginine + ATP = L-arginyl-tRNA(Arg) + AMP + diphosphate. This is Arginine--tRNA ligase from Prochlorococcus marinus (strain NATL2A).